The sequence spans 540 residues: Chaperonin GroEL (540 aa).

Residues 30–33 (TLGP), lysine 51, 87–91 (DGTTT), glycine 415, 479–481 (NAA), and aspartate 495 each bind ATP.

Belongs to the chaperonin (HSP60) family. In terms of assembly, forms a cylinder of 14 subunits composed of two heptameric rings stacked back-to-back. Interacts with the co-chaperonin GroES.

It localises to the cytoplasm. It catalyses the reaction ATP + H2O + a folded polypeptide = ADP + phosphate + an unfolded polypeptide.. Together with its co-chaperonin GroES, plays an essential role in assisting protein folding. The GroEL-GroES system forms a nano-cage that allows encapsulation of the non-native substrate proteins and provides a physical environment optimized to promote and accelerate protein folding. The chain is Chaperonin GroEL from Pluralibacter gergoviae (Enterobacter gergoviae).